A 136-amino-acid polypeptide reads, in one-letter code: ATP synthase epsilon chain (136 aa).

The interval 106–136 (MEGQPSSPEKLKAQQQLNEARARLQASKTAD) is disordered.

This sequence belongs to the ATPase epsilon chain family. As to quaternary structure, F-type ATPases have 2 components, CF(1) - the catalytic core - and CF(0) - the membrane proton channel. CF(1) has five subunits: alpha(3), beta(3), gamma(1), delta(1), epsilon(1). CF(0) has three main subunits: a, b and c.

The protein resides in the cellular thylakoid membrane. Functionally, produces ATP from ADP in the presence of a proton gradient across the membrane. The sequence is that of ATP synthase epsilon chain from Synechococcus sp. (strain CC9605).